The primary structure comprises 260 residues: tRNA1(Val) (adenine(37)-N6)-methyltransferase (260 aa).

This sequence belongs to the methyltransferase superfamily. tRNA (adenine-N(6)-)-methyltransferase family.

Its subcellular location is the cytoplasm. The catalysed reaction is adenosine(37) in tRNA1(Val) + S-adenosyl-L-methionine = N(6)-methyladenosine(37) in tRNA1(Val) + S-adenosyl-L-homocysteine + H(+). Specifically methylates the adenine in position 37 of tRNA(1)(Val) (anticodon cmo5UAC). The protein is tRNA1(Val) (adenine(37)-N6)-methyltransferase of Serratia proteamaculans (strain 568).